Here is a 113-residue protein sequence, read N- to C-terminus: Cysteine proteinase inhibitor 6 (113 aa).

Positions 1–18 are cleaved as a signal peptide; that stretch reads MAMTTRTLLLAAVCAAAA. The short motif at 65–69 is the Secondary area of contact element; that stretch reads QVVSG.

Belongs to the cystatin family. Phytocystatin subfamily.

It is found in the secreted. Functionally, specific inhibitor of cysteine proteinases. Probably involved in the regulation of endogenous processes and in defense against pests and pathogens. This chain is Cysteine proteinase inhibitor 6, found in Oryza sativa subsp. japonica (Rice).